We begin with the raw amino-acid sequence, 292 residues long: 2-(5''-triphosphoribosyl)-3'-dephosphocoenzyme-A synthase (292 aa).

It belongs to the CitG/MdcB family.

It catalyses the reaction 3'-dephospho-CoA + ATP = 2'-(5''-triphospho-alpha-D-ribosyl)-3'-dephospho-CoA + adenine. In terms of biological role, catalyzes the formation of 2-(5''-triphosphoribosyl)-3'-dephosphocoenzyme-A, the precursor of the prosthetic group of the holo-acyl carrier protein (gamma chain) of citrate lyase, from ATP and dephospho-CoA. The polypeptide is 2-(5''-triphosphoribosyl)-3'-dephosphocoenzyme-A synthase (Escherichia coli O7:K1 (strain IAI39 / ExPEC)).